The following is a 190-amino-acid chain: Putative acetyltransferase DDB_G0275913 (190 aa).

The protein belongs to the transferase hexapeptide repeat family.

The protein is Putative acetyltransferase DDB_G0275913 of Dictyostelium discoideum (Social amoeba).